A 188-amino-acid polypeptide reads, in one-letter code: ATP synthase subunit b (188 aa).

The chain crosses the membrane as a helical span at residues 7 to 26 (TAAAGAMTLFFASMAYASGD).

It belongs to the ATPase B chain family. In terms of assembly, F-type ATPases have 2 components, F(1) - the catalytic core - and F(0) - the membrane proton channel. F(1) has five subunits: alpha(3), beta(3), gamma(1), delta(1), epsilon(1). F(0) has three main subunits: a(1), b(2) and c(10-14). The alpha and beta chains form an alternating ring which encloses part of the gamma chain. F(1) is attached to F(0) by a central stalk formed by the gamma and epsilon chains, while a peripheral stalk is formed by the delta and b chains.

The protein localises to the cell inner membrane. F(1)F(0) ATP synthase produces ATP from ADP in the presence of a proton or sodium gradient. F-type ATPases consist of two structural domains, F(1) containing the extramembraneous catalytic core and F(0) containing the membrane proton channel, linked together by a central stalk and a peripheral stalk. During catalysis, ATP synthesis in the catalytic domain of F(1) is coupled via a rotary mechanism of the central stalk subunits to proton translocation. In terms of biological role, component of the F(0) channel, it forms part of the peripheral stalk, linking F(1) to F(0). This Nitratidesulfovibrio vulgaris (strain DP4) (Desulfovibrio vulgaris) protein is ATP synthase subunit b.